The following is a 769-amino-acid chain: 5-methyltetrahydropteroyltriglutamate--homocysteine methyltransferase (769 aa).

5-methyltetrahydropteroyltri-L-glutamate contacts are provided by residues Arg17–Lys20 and Lys118. L-homocysteine contacts are provided by residues Ile441–Ser443 and Glu494. L-methionine-binding positions include Ile441–Ser443 and Glu494. Residues Arg525–Cys526 and Trp571 each bind 5-methyltetrahydropteroyltri-L-glutamate. Position 609 (Asp609) interacts with L-homocysteine. Asp609 is a binding site for L-methionine. Residue Glu615 coordinates 5-methyltetrahydropteroyltri-L-glutamate. 3 residues coordinate Zn(2+): His651, Cys653, and Glu675. His705 (proton donor) is an active-site residue. Cys737 is a Zn(2+) binding site.

It belongs to the vitamin-B12 independent methionine synthase family. Zn(2+) is required as a cofactor.

The enzyme catalyses 5-methyltetrahydropteroyltri-L-glutamate + L-homocysteine = tetrahydropteroyltri-L-glutamate + L-methionine. The protein operates within amino-acid biosynthesis; L-methionine biosynthesis via de novo pathway; L-methionine from L-homocysteine (MetE route): step 1/1. Its function is as follows. Catalyzes the transfer of a methyl group from 5-methyltetrahydrofolate to homocysteine resulting in methionine formation. The sequence is that of 5-methyltetrahydropteroyltriglutamate--homocysteine methyltransferase from Blochmanniella floridana.